The primary structure comprises 115 residues: Probable non-functional T cell receptor beta variable 23-1 (115 aa).

A signal peptide spans 1–21 (MGTRLLGCAALCLLAADSFHA). One can recognise an Ig-like domain in the interval 22-115 (KVTQTPGHLV…TALYLCASSQ (94 aa)). Cysteines 42 and 111 form a disulfide.

Alpha-beta TR is a heterodimer composed of an alpha and beta chain; disulfide-linked. The alpha-beta TR is associated with the transmembrane signaling CD3 coreceptor proteins to form the TR-CD3 (TcR or TCR). The assembly of alpha-beta TR heterodimers with CD3 occurs in the endoplasmic reticulum where a single alpha-beta TR heterodimer associates with one CD3D-CD3E heterodimer, one CD3G-CD3E heterodimer and one CD247 homodimer forming a stable octameric structure. CD3D-CD3E and CD3G-CD3E heterodimers preferentially associate with TR alpha and TR beta chains, respectively. The association of the CD247 homodimer is the last step of TcR assembly in the endoplasmic reticulum and is required for transport to the cell surface.

The protein localises to the cell membrane. Its function is as follows. Probable non-functional open reading frame (ORF) of V region of the variable domain of T cell receptor (TR) beta chain. Non-functional ORF generally cannot participate in the synthesis of a productive T cell receptor (TR) chain due to altered V-(D)-J or switch recombination and/or splicing site (at mRNA level) and/or conserved amino acid change (protein level). Alpha-beta T cell receptors are antigen specific receptors which are essential to the immune response and are present on the cell surface of T lymphocytes. Recognize peptide-major histocompatibility (MH) (pMH) complexes that are displayed by antigen presenting cells (APC), a prerequisite for efficient T cell adaptive immunity against pathogens. Binding of alpha-beta TR to pMH complex initiates TR-CD3 clustering on the cell surface and intracellular activation of LCK that phosphorylates the ITAM motifs of CD3G, CD3D, CD3E and CD247 enabling the recruitment of ZAP70. In turn ZAP70 phosphorylates LAT, which recruits numerous signaling molecules to form the LAT signalosome. The LAT signalosome propagates signal branching to three major signaling pathways, the calcium, the mitogen-activated protein kinase (MAPK) kinase and the nuclear factor NF-kappa-B (NF-kB) pathways, leading to the mobilization of transcription factors that are critical for gene expression and essential for T cell growth and differentiation. The T cell repertoire is generated in the thymus, by V-(D)-J rearrangement. This repertoire is then shaped by intrathymic selection events to generate a peripheral T cell pool of self-MH restricted, non-autoaggressive T cells. Post-thymic interaction of alpha-beta TR with the pMH complexes shapes TR structural and functional avidity. The chain is Probable non-functional T cell receptor beta variable 23-1 from Homo sapiens (Human).